A 257-amino-acid chain; its full sequence is Steroid 5-alpha-reductase DET2 (257 aa).

6 consecutive transmembrane segments (helical) span residues 11–31 (FIVFFILVMAFPTFILCQFFT), 47–67 (ISPPIAWAFMESPTLWLTIIV), 78–97 (LAFLLISPYLFHYTNRTIIY), 110–130 (FPLNIAVTAFIFNLLNAYIQS), 151–171 (IGLVIFGSGMLLNIWADGVLL), and 200–220 (IMEWLGWALMTWSWAGLAFFV).

It belongs to the steroid 5-alpha reductase family. Mostly expressed in leaves and hypocotyls and, to a lower extent, in stems, cotyledons, roots, seeds and callus.

It is found in the membrane. The catalysed reaction is a 3-oxo-5alpha-steroid + NADP(+) = a 3-oxo-Delta(4)-steroid + NADPH + H(+). Its pathway is plant hormone biosynthesis; brassinosteroid biosynthesis. With respect to regulation, repressed by steroid (4-MA, VG106, PD91, PD17, Finasteride) and non-steroid (AS601811, AFA27, AFA76, AFA131, AFA192) inhibitors; steroid inhibitors are generally more efficient. Involved in a reduction step in the biosynthesis of the plant steroid, brassinolide (BL). Can use progesterone, testosterone, androstenedione and campestenone as substrate. The sequence is that of Steroid 5-alpha-reductase DET2 from Solanum lycopersicum (Tomato).